The chain runs to 871 residues: Transient receptor potential cation channel subfamily V member 4 (871 aa).

Disordered stretches follow at residues 1–68 (MADP…PNLR) and 110–143 (YGTY…PQPP). Over 1 to 469 (MADPGDGPRA…RDKWRKFGAV (469 aa)) the chain is Cytoplasmic. Tyr-110 is subject to Phosphotyrosine; by SRC-type Tyr-kinases. The span at 116–129 (HPSDNKRWRRKVVE) shows a compositional bias: basic and acidic residues. Residues Lys-192, Lys-197, Asn-201, 236–239 (YRGQ), and Arg-248 contribute to the ATP site. ANK repeat units follow at residues 237–266 (RGQT…DVHA) and 284–313 (FGEL…KKAD). 249–251 (RCK) is an a 1,2-diacyl-sn-glycero-3-phospho-(1D-myo-inositol-4,5-bisphosphate) binding site. Tyr-253 bears the Phosphotyrosine; by LYN mark. A 1,2-diacyl-sn-glycero-3-phospho-(1D-myo-inositol-4,5-bisphosphate) contacts are provided by residues 296 to 299 (NQPH) and Lys-344. Residues 369-398 (DGLSPLMMAAKTGKIGVFQHIIRREVTDED) form an ANK 3 repeat. Residues 470 to 490 (SFYINVVSYLCAMVIFTLTAY) form a helical membrane-spanning segment. The Extracellular portion of the chain corresponds to 491-507 (YQPLEGTPPYPYRTTVD). Residues 508-534 (YLRLAGEVITLFTGVLFFFTSIKDLFT) traverse the membrane as a helical segment. At 535 to 547 (KKCPGVNSLFVDG) the chain is on the cytoplasmic side. A helical membrane pass occupies residues 548–568 (SFQLLYFIYSVLVVVSAALYL). Over 569–572 (AGIE) the chain is Extracellular. The helical transmembrane segment at 573–593 (AYLAVMVFALVLGWMNALYFT) threads the bilayer. Residues 594–608 (RGLKLTGTYSIMIQK) are Cytoplasmic-facing. A helical transmembrane segment spans residues 609 to 636 (ILFKDLFRFLLVYLLFMIGYASALVTLL). The Extracellular portion of the chain corresponds to 637 to 665 (NPCTNMKVCDEDQSNCTVPTYPACRDSET). Asn-651 carries an N-linked (GlcNAc...) asparagine glycan. Residues 666–685 (FSAFLLDLFKLTIGMGDLEM) constitute an intramembrane region (pore-forming). The Selectivity filter motif lies at 679–682 (GMGD). Asp-682 contributes to the Ca(2+) binding site. The Extracellular segment spans residues 686–693 (LSSAKYPV). Residues 694-722 (VFILLLVTYIILTFVLLLNMLIALMGETV) form a helical membrane-spanning segment. Residues 723–871 (GQVSKESKHI…PKWRTDDAPL (149 aa)) lie on the Cytoplasmic side of the membrane. Tyr-805 is modified (phosphotyrosine; by SRC-type Tyr-kinases). The segment at 812-831 (HTVGRLRRDRWSSVVPRVVE) is interaction with calmodulin and ITPR3. Ser-824 carries the phosphoserine; by PKC and PKA modification. The tract at residues 850–871 (NPNCDGHQQGYAPKWRTDDAPL) is disordered.

This sequence belongs to the transient receptor (TC 1.A.4) family. TrpV subfamily. TRPV4 sub-subfamily. In terms of assembly, homotetramer. Interacts with calmodulin. Interacts with CTNNB1. The TRPV4 and CTNNB1 complex can interact with CDH1. Part of a complex containing MLC1, AQP4, HEPACAM and ATP1B1. Interacts with MAP7 and Src family Tyr protein kinases LYN, SRC, FYN, HCK, LCK and YES. Interacts with PACSIN1, PACSIN2 and PACSIN3 (via SH3 domain). Interacts with ITPR3. Interacts with AQP5; the interaction is probably indirect and regulates TRPV4 activation by hypotonicity. Interacts with ANO1. Interacts (via C-terminus) with PKD2 (via C-terminus). Interacts with DDX3X; this interaction is decreased when the channel is activated. N-glycosylated. As to expression, detected in liver, kidney, heart, brain cortex, cerebellum and brainstem (at protein level). Expressed in salivary glands (at protein level). Expressed in heart, lung, spleen, liver, kidney, brain, skeletal muscle and testis. In the central nervous system, expressed in the lamina terminalis (arched vascular organ and neurons of the subfornical organ), median preoptic area, ventral hippocampal commissure, and ependymal cells of the choroid plexus. In the cochlea, expressed in both inner and outer hair cells, and in marginal cells of the cochlear stria vascularis. Expressed in large neurons of the trigeminal ganglion. In the kidney cortex, strongly expressed by epithelial cells of tubules and much weaker in glomeruli.

The protein localises to the cell membrane. The protein resides in the apical cell membrane. Its subcellular location is the cell junction. It localises to the adherens junction. It is found in the cell projection. The protein localises to the cilium. It carries out the reaction Ca(2+)(in) = Ca(2+)(out). Functionally, non-selective calcium permeant cation channel involved in osmotic sensitivity and mechanosensitivity. Activation by exposure to hypotonicity within the physiological range exhibits an outward rectification. Also activated by heat, low pH, citrate and phorbol esters. Increase of intracellular Ca(2+) potentiates currents. Channel activity seems to be regulated by a calmodulin-dependent mechanism with a negative feedback mechanism. Acts as a regulator of intracellular Ca(2+) in synoviocytes. Plays an obligatory role as a molecular component in the nonselective cation channel activation induced by 4-alpha-phorbol 12,13-didecanoate and hypotonic stimulation in synoviocytes and also regulates production of IL-8. Together with PKD2, forms mechano- and thermosensitive channels in cilium. Promotes cell-cell junction formation in skin keratinocytes and plays an important role in the formation and/or maintenance of functional intercellular barriers. Negatively regulates expression of PPARGC1A, UCP1, oxidative metabolism and respiration in adipocytes. Regulates expression of chemokines and cytokines related to pro-inflammatory pathway in adipocytes. Together with AQP5, controls regulatory volume decrease in salivary epithelial cells. Required for normal development and maintenance of bone and cartilage. In its inactive state, may sequester DDX3X at the plasma membrane. When activated, the interaction between both proteins is affected and DDX3X relocalizes to the nucleus. In neurons of the central nervous system, could play a role in triggering voluntary water intake in response to increased sodium concentration in body fluid. The protein is Transient receptor potential cation channel subfamily V member 4 (Trpv4) of Mus musculus (Mouse).